The sequence spans 156 residues: Transcription inhibitor protein Gfh1 (156 aa).

Positions 1 to 74 (MAREVKLTKA…LEDILSRAVI (74 aa)) form a coiled coil.

The protein belongs to the GreA/GreB family. As to quaternary structure, interacts with RNAP.

Its function is as follows. Inhibits all catalytic activities of RNA polymerase (RNAP) by partially occluding its substrate-binding site and preventing NTP binding. The chain is Transcription inhibitor protein Gfh1 (gfh1) from Thermus thermophilus (strain ATCC BAA-163 / DSM 7039 / HB27).